The following is a 412-amino-acid chain: Mast cell carboxypeptidase A (412 aa).

Residues 1–10 (LMGVIYSTLA) form the signal peptide. The propeptide at 11 to 104 (IAPVQFDREK…IDKQFDVKEE (94 aa)) is activation peptide. The Peptidase M14 domain occupies 113 to 407 (KYNDWNKIVS…LSVKFIAKYI (295 aa)). Disulfide bonds link cysteine 168–cysteine 181 and cysteine 240–cysteine 263. Zn(2+) contacts are provided by histidine 171 and glutamate 174. Zn(2+) is bound at residue histidine 299. Glutamate 373 functions as the Proton donor/acceptor in the catalytic mechanism.

Belongs to the peptidase M14 family. It depends on Zn(2+) as a cofactor.

The protein localises to the cytoplasmic vesicle. It is found in the secretory vesicle. It carries out the reaction Release of a C-terminal amino acid, but little or no action with -Asp, -Glu, -Arg, -Lys or -Pro.. The protein is Mast cell carboxypeptidase A (Cpa3) of Rattus norvegicus (Rat).